We begin with the raw amino-acid sequence, 609 residues long: Protein kinase PVPK-1 (609 aa).

Residues 1 to 19 (MESSVNGVDSLSEVQNSVS) show a composition bias toward polar residues. Disordered regions lie at residues 1 to 51 (MESS…GHQT) and 80 to 100 (PTKL…EPNG). A Protein kinase domain is found at 229–565 (FRLLKKLGCG…ATEIKQHPFF (337 aa)). ATP contacts are provided by residues 235 to 243 (LGCGDIGSV) and lysine 258. Catalysis depends on aspartate 354, which acts as the Proton acceptor. The disordered stretch occupies residues 429–448 (GKSKKDKKSKPKNDMHNQVT).

This sequence belongs to the protein kinase superfamily. Ser/Thr protein kinase family.

It carries out the reaction L-seryl-[protein] + ATP = O-phospho-L-seryl-[protein] + ADP + H(+). It catalyses the reaction L-threonyl-[protein] + ATP = O-phospho-L-threonyl-[protein] + ADP + H(+). The protein is Protein kinase PVPK-1 of Phaseolus vulgaris (Kidney bean).